The following is a 1084-amino-acid chain: TNF receptor-associated factor family protein DDB_G0272098 (1084 aa).

Positions 19 to 103 (YYCPDCGELL…KNRYYETKNF (85 aa)) constitute an LIM zinc-binding domain. TRAF-type zinc fingers lie at residues 122 to 190 (KHIK…IDHE) and 191 to 248 (IHLS…YNMS). Residues 265-321 (IEEQNQDIKELHNFIENHLSKKFIDLDTIVNIQKYLIKNKNQKISQLTEIIKRVDNS) are a coiled coil. Disordered stretches follow at residues 348–392 (YKNS…NINE), 490–523 (IRQQ…NTTI), 537–656 (NNNI…KDGL), and 709–897 (SIVE…NDDD). Low complexity-rich tracts occupy residues 349-375 (KNSN…TNEN), 492-509 (QQQQ…QQQQ), 537-549 (NNNI…NNNK), and 556-570 (ITAA…TTST). Positions 489–553 (LIRQQQQQQQ…NNNNNKNNDD (65 aa)) form a coiled coil. Residues 571–586 (HTILNGTNNEASMTDI) are compositionally biased toward polar residues. The segment covering 587–637 (NETTSTTTTAETTEATASESTEESNNTAETTTTTTTTTTTITTAAETVNST) has biased composition (low complexity). Residues 644-656 (TSEKVEEKGKDGL) show a composition bias toward basic and acidic residues. Residues 735–852 (NGNENENENE…NNNNNNNENV (118 aa)) adopt a coiled-coil conformation. Positions 739–757 (NENENENENENENENENEN) are enriched in acidic residues. A compositionally biased stretch (polar residues) spans 774–785 (SNINTSNDTEPT). The span at 790–799 (EDIKKNKENE) shows a compositional bias: basic and acidic residues. Low complexity predominate over residues 809-849 (NNNIKSVEDTNNNNNNNNNNNNNNNNNNNNNNNNNNNNNNN). Basic and acidic residues-rich tracts occupy residues 853–864 (YDIKKDRNRENV) and 875–892 (ENGK…SEDK). Residues 909–1042 (IFRNQILFKD…DNCFIVNLEV (134 aa)) enclose the MATH domain. The segment at 1056–1084 (LLQKSSPPAATTTTTTSSSSSKTTPKTKR) is disordered. The segment covering 1059–1084 (KSSPPAATTTTTTSSSSSKTTPKTKR) has biased composition (low complexity).

Belongs to the TNF receptor-associated factor family.

The protein resides in the cytoplasm. Its function is as follows. Probable adapter protein and signal transducer that links members of the tumor necrosis factor receptor family to different signaling pathways by association with the receptor cytoplasmic domain and kinases. The sequence is that of TNF receptor-associated factor family protein DDB_G0272098 from Dictyostelium discoideum (Social amoeba).